Consider the following 129-residue polypeptide: UPF0325 protein YE3288 (129 aa).

It belongs to the UPF0325 family.

This is UPF0325 protein YE3288 from Yersinia enterocolitica serotype O:8 / biotype 1B (strain NCTC 13174 / 8081).